Reading from the N-terminus, the 422-residue chain is MDRRHRVYRVFNQEMYVEPNFKVVKELGQGAYGIVCAARNVASKDQEAVAIKKITNVFSKSILTKRALREIKLLIHFRNHRNITCIYDLDIINPYNFNEVYIYEELMEADLNAIIKSGQPLTDAHFQSFIYQILCGLKYIHSANVIHRDLKPGNLLVNADCELKICDFGLARGCSENPEENPGFMTEYVATRWYRAPEIMLSFSSYHKGIDVWSVGCILAELLGGTPLFKGKDFVHQLNLILHQLGTPDEETLSHISSSRAQEYVRSLPKQRPIPFETNFPKANPLALDLLAKLLAFDPNRRISVDDALEHPYLAVWHDPSDEPVCDSVFDFSFEYIEDANELRRVILDEVLNFRQKVRRRSHPTNPTVNIPQPAQTVPSNDNGSFNVSSSSSSQTSNKKRHDHSYNETAAIDHKSDDNRHN.

Positions Phe21–Leu314 constitute a Protein kinase domain. Residues Leu27–Val35 and Lys52 each bind ATP. The active-site Proton acceptor is Asp149. At Thr186 the chain carries Phosphothreonine. Positions Thr186 to Tyr188 match the TXY motif. A Phosphotyrosine modification is found at Tyr188. The segment at Arg359–Asn422 is disordered. Residues Pro364 to Pro379 show a composition bias toward polar residues. Residues Ser380 to Ser397 show a composition bias toward low complexity. Basic and acidic residues predominate over residues Ala411–Asn422.

It belongs to the protein kinase superfamily. CMGC Ser/Thr protein kinase family. MAP kinase subfamily. The cofactor is Mg(2+). In terms of processing, dually phosphorylated on Thr-186 and Tyr-188, which activates the enzyme.

The enzyme catalyses L-seryl-[protein] + ATP = O-phospho-L-seryl-[protein] + ADP + H(+). It carries out the reaction L-threonyl-[protein] + ATP = O-phospho-L-threonyl-[protein] + ADP + H(+). With respect to regulation, activated by tyrosine and threonine phosphorylation by skh1/pek1. Functionally, regulates cell integrity and functions coordinately with the protein kinase C pathway (pck1 and pck2). Involved the regulation of wall architecture, cell shape, cytokinesis in exponential and stationary phase, and metabolism of ions. In Schizosaccharomyces pombe (strain 972 / ATCC 24843) (Fission yeast), this protein is Mitogen-activated protein kinase spm1 (spm1).